The chain runs to 446 residues: High mobility group B protein 13 (446 aa).

Disordered stretches follow at residues Met1–Phe43 and Leu110–Lys130. The span at Ala11–Lys22 shows a compositional bias: basic residues. DNA-binding regions (HMG box) lie at residues Thr129–Lys197 and Pro246–Lys312. Basic and acidic residues predominate over residues Asn349–Lys371. Residues Asn349–Ser377 form a disordered region. Positions Pro372–Asn440 form a DNA-binding region, HMG box 3.

The protein belongs to the HMGB family.

The protein localises to the nucleus. The protein is High mobility group B protein 13 (HMGB13) of Arabidopsis thaliana (Mouse-ear cress).